We begin with the raw amino-acid sequence, 156 residues long: Cyanate hydratase (156 aa).

Catalysis depends on residues R96, E99, and S122.

Belongs to the cyanase family.

It catalyses the reaction cyanate + hydrogencarbonate + 3 H(+) = NH4(+) + 2 CO2. Catalyzes the reaction of cyanate with bicarbonate to produce ammonia and carbon dioxide. The polypeptide is Cyanate hydratase (Burkholderia cenocepacia (strain ATCC BAA-245 / DSM 16553 / LMG 16656 / NCTC 13227 / J2315 / CF5610) (Burkholderia cepacia (strain J2315))).